Reading from the N-terminus, the 249-residue chain is Phosphate import ATP-binding protein PstB (249 aa).

The 241-residue stretch at 4-244 folds into the ABC transporter domain; sequence IQTKDLNLYY…PKDKRTEDYI (241 aa). Position 36–43 (36–43) interacts with ATP; that stretch reads GPSGCGKS.

This sequence belongs to the ABC transporter superfamily. Phosphate importer (TC 3.A.1.7) family. The complex is composed of two ATP-binding proteins (PstB), two transmembrane proteins (PstC and PstA) and a solute-binding protein (PstS).

It is found in the cell membrane. It carries out the reaction phosphate(out) + ATP + H2O = ADP + 2 phosphate(in) + H(+). Its function is as follows. Part of the ABC transporter complex PstSACB involved in phosphate import. Responsible for energy coupling to the transport system. The polypeptide is Phosphate import ATP-binding protein PstB (Clostridium acetobutylicum (strain ATCC 824 / DSM 792 / JCM 1419 / IAM 19013 / LMG 5710 / NBRC 13948 / NRRL B-527 / VKM B-1787 / 2291 / W)).